Reading from the N-terminus, the 301-residue chain is Acetylglutamate kinase (301 aa).

Residues 76-77, arginine 98, and asparagine 192 contribute to the substrate site; that span reads GG.

It belongs to the acetylglutamate kinase family. ArgB subfamily.

The protein localises to the cytoplasm. It carries out the reaction N-acetyl-L-glutamate + ATP = N-acetyl-L-glutamyl 5-phosphate + ADP. Its pathway is amino-acid biosynthesis; L-arginine biosynthesis; N(2)-acetyl-L-ornithine from L-glutamate: step 2/4. Functionally, catalyzes the ATP-dependent phosphorylation of N-acetyl-L-glutamate. This is Acetylglutamate kinase from Chlorobaculum parvum (strain DSM 263 / NCIMB 8327) (Chlorobium vibrioforme subsp. thiosulfatophilum).